We begin with the raw amino-acid sequence, 573 residues long: Threonine--tRNA ligase (573 aa).

Residues 174-474 (DHRRINKILE…LLEQTKGALD (301 aa)) form a catalytic region. Positions 268, 319, and 451 each coordinate Zn(2+).

Belongs to the class-II aminoacyl-tRNA synthetase family. As to quaternary structure, homodimer. It depends on Zn(2+) as a cofactor.

The protein resides in the cytoplasm. The catalysed reaction is tRNA(Thr) + L-threonine + ATP = L-threonyl-tRNA(Thr) + AMP + diphosphate + H(+). Functionally, catalyzes the attachment of threonine to tRNA(Thr) in a two-step reaction: L-threonine is first activated by ATP to form Thr-AMP and then transferred to the acceptor end of tRNA(Thr). Also edits incorrectly charged L-seryl-tRNA(Thr). This chain is Threonine--tRNA ligase, found in Mycoplasmoides gallisepticum (strain R(low / passage 15 / clone 2)) (Mycoplasma gallisepticum).